Reading from the N-terminus, the 517-residue chain is Ubiquitin carboxyl-terminal hydrolase 30 (517 aa).

The Mitochondrial intermembrane portion of the chain corresponds to 1 to 35; that stretch reads MLSSRAEAAMTAADRAIQRFLRTGAAVRYKVMKNW. A helical transmembrane segment spans residues 36–56; that stretch reads GVIGGIAAALAAGIYVIWGPI. The Cytoplasmic segment spans residues 57–517; the sequence is TERKKRRKGL…HQSQECKSEE (461 aa). Positions 68 to 502 constitute a USP domain; sequence PGLVNLGNTC…SAYLLFYERV (435 aa). Catalysis depends on Cys77, which acts as the Nucleophile. Glycyl lysine isopeptide (Lys-Gly) (interchain with G-Cter in ubiquitin) cross-links involve residues Lys235 and Lys289. Residues 364-395 form a disordered region; that stretch reads SQHNPKLNKNPGPTLELQDGPGAPTPVLNQPG. His452 acts as the Proton acceptor in catalysis.

The protein belongs to the peptidase C19 family. In terms of processing, ubiquitinated by parkin (PRKN) at Lys-235 and Lys-289, leading to its degradation. As to expression, expressed in skeletal muscle, pancreas, liver and kidney.

Its subcellular location is the mitochondrion outer membrane. It catalyses the reaction Thiol-dependent hydrolysis of ester, thioester, amide, peptide and isopeptide bonds formed by the C-terminal Gly of ubiquitin (a 76-residue protein attached to proteins as an intracellular targeting signal).. Inhibited by the diterpenoid derivative 15-oxospiramilactone (S3). In terms of biological role, deubiquitinating enzyme tethered to the mitochondrial outer membrane that acts as a key inhibitor of mitophagy by counteracting the action of parkin (PRKN): hydrolyzes ubiquitin attached by parkin on target proteins, such as RHOT1/MIRO1 and TOMM20, thereby blocking parkin's ability to drive mitophagy. Preferentially cleaves 'Lys-6'- and 'Lys-11'-linked polyubiquitin chains, 2 types of linkage that participate in mitophagic signaling. Does not cleave efficiently polyubiquitin phosphorylated at 'Ser-65'. Acts as a negative regulator of mitochondrial fusion by mediating deubiquitination of MFN1 and MFN2. In Homo sapiens (Human), this protein is Ubiquitin carboxyl-terminal hydrolase 30.